A 181-amino-acid polypeptide reads, in one-letter code: Cell division protein SepF (181 aa).

Acidic residues predominate over residues 18–27 (EDYLDDDDYD). Residues 18 to 42 (EDYLDDDDYDDGRAVGHDDRRAMHE) form a disordered region. A compositionally biased stretch (basic and acidic residues) spans 28–42 (DGRAVGHDDRRAMHE).

This sequence belongs to the SepF family. As to quaternary structure, homodimer. Interacts with FtsZ.

The protein resides in the cytoplasm. Cell division protein that is part of the divisome complex and is recruited early to the Z-ring. Probably stimulates Z-ring formation, perhaps through the cross-linking of FtsZ protofilaments. Its function overlaps with FtsA. This chain is Cell division protein SepF, found in Frankia alni (strain DSM 45986 / CECT 9034 / ACN14a).